Reading from the N-terminus, the 30-residue chain is Kappa-sparatoxin-Hv1b (30 aa).

Disulfide bonds link Cys3-Cys17, Cys10-Cys22, and Cys16-Cys26. Trp30 is modified (tryptophan amide).

It belongs to the neurotoxin 10 (Hwtx-1) family. 19 (HpTX2) subfamily. In terms of tissue distribution, expressed by the venom gland.

Its subcellular location is the secreted. Its function is as follows. Inhibitor of voltage-gated potassium channels of the Kv4/KCND family. Inhibition of Kv4.3/KCND3 and Kv4.2/KCND2 is strongly voltage-dependent, while inhibition of Kv4.1/KCND1 shows less voltage-dependence. Its binding site may be near the potassium channel voltage sensor. Also blocks calcium channels. The protein is Kappa-sparatoxin-Hv1b of Heteropoda venatoria (Brown huntsman spider).